The chain runs to 304 residues: 4-diphosphocytidyl-2-C-methyl-D-erythritol kinase (304 aa).

Lysine 20 is a catalytic residue. 106 to 116 (PVASGIGGGSG) provides a ligand contact to ATP. Aspartate 148 is an active-site residue.

Belongs to the GHMP kinase family. IspE subfamily.

The catalysed reaction is 4-CDP-2-C-methyl-D-erythritol + ATP = 4-CDP-2-C-methyl-D-erythritol 2-phosphate + ADP + H(+). It participates in isoprenoid biosynthesis; isopentenyl diphosphate biosynthesis via DXP pathway; isopentenyl diphosphate from 1-deoxy-D-xylulose 5-phosphate: step 3/6. Catalyzes the phosphorylation of the position 2 hydroxy group of 4-diphosphocytidyl-2C-methyl-D-erythritol. The chain is 4-diphosphocytidyl-2-C-methyl-D-erythritol kinase from Bartonella bacilliformis (strain ATCC 35685 / KC583 / Herrer 020/F12,63).